The chain runs to 480 residues: Argininosuccinate lyase (480 aa).

Positions Met1–Gly20 are disordered.

Belongs to the lyase 1 family. Argininosuccinate lyase subfamily.

Its subcellular location is the cytoplasm. The enzyme catalyses 2-(N(omega)-L-arginino)succinate = fumarate + L-arginine. The protein operates within amino-acid biosynthesis; L-arginine biosynthesis; L-arginine from L-ornithine and carbamoyl phosphate: step 3/3. This chain is Argininosuccinate lyase, found in Saccharopolyspora erythraea (strain ATCC 11635 / DSM 40517 / JCM 4748 / NBRC 13426 / NCIMB 8594 / NRRL 2338).